Consider the following 526-residue polypeptide: MARETEFNDKSPSSTDDGMSQSHFSDKLKNLFHFRRNRAATVSTSVRNDQRDNDSDDSTFDINVNQLNELDLNDSSDQLDSRPSLRRVSSAPDSHKGVEAPPPRPLINMSNIRKAQVKILKNPGNYIFGRTEYGKRTYSGNSTKISRVEVTPHSFEKIRLLGQGDVGKVYLVRQKSNHRLFAMKILNKREMIKRHKVNRVLAEQEILTKSKHPFIVTLYHSFQSRDYLYLCMEYCAGGEFFRALHSLPKHILPEKDACFYAAEVTAALEYLHLMGFIYRDLKPENILLHQSGHIMLSDFDLSKPISIVTHPTVVLPKHSTFSQEKPALDTNSYFSNFRTNSFVGTEEYIAPEVIRSCGHTVAVDWWTLGIFIYEILYGTTPFKGKNRHATFSNILYSDVSFPEYHGAPNVSSTCKSLIRRLLVKDESKRCGSVAGASDIKQHPFFRHIQWALLRSMKPPIIPKIEDGMEAVEPSDNDNEEEDFLNSQYLISANLPAVDMHSSTPVNEQSNPFDSFSSVTLHHAGDE.

Disordered stretches follow at residues 1–24 (MARE…QSHF) and 39–106 (AATV…PRPL). The span at 10–23 (KSPSSTDDGMSQSH) shows a compositional bias: polar residues. Positions 65 to 78 (NQLNELDLNDSSDQ) are enriched in low complexity. Phosphoserine is present on S154. Residues 155–445 (FEKIRLLGQG…ASDIKQHPFF (291 aa)) form the Protein kinase domain. Residues 161–169 (LGQGDVGKV) and K184 contribute to the ATP site. Residue D280 is the Proton acceptor of the active site. Residue T339 is modified to Phosphothreonine. The residue at position 341 (S341) is a Phosphoserine. Y348 is modified (phosphotyrosine). One can recognise an AGC-kinase C-terminal domain in the interval 446-526 (RHIQWALLRS…SVTLHHAGDE (81 aa)). The interval 499–526 (MHSSTPVNEQSNPFDSFSSVTLHHAGDE) is disordered. Residues 500 to 519 (HSSTPVNEQSNPFDSFSSVT) show a composition bias toward polar residues.

Belongs to the protein kinase superfamily. AGC Ser/Thr protein kinase family.

Its subcellular location is the cytoplasm. The enzyme catalyses L-seryl-[protein] + ATP = O-phospho-L-seryl-[protein] + ADP + H(+). The catalysed reaction is L-threonyl-[protein] + ATP = O-phospho-L-threonyl-[protein] + ADP + H(+). The protein is Serine/threonine-protein kinase ppk22 (ppk22) of Schizosaccharomyces pombe (strain 972 / ATCC 24843) (Fission yeast).